The chain runs to 177 residues: Large ribosomal subunit protein uL10 (177 aa).

It belongs to the universal ribosomal protein uL10 family. In terms of assembly, part of the ribosomal stalk of the 50S ribosomal subunit. The N-terminus interacts with L11 and the large rRNA to form the base of the stalk. The C-terminus forms an elongated spine to which L12 dimers bind in a sequential fashion forming a multimeric L10(L12)X complex.

Its function is as follows. Forms part of the ribosomal stalk, playing a central role in the interaction of the ribosome with GTP-bound translation factors. This is Large ribosomal subunit protein uL10 from Xanthomonas axonopodis pv. citri (strain 306).